The sequence spans 196 residues: Glutathione-specific gamma-glutamylcyclotransferase 1 (196 aa).

A substrate-binding site is contributed by 15–20 (IFGYGS). Glu95 (proton acceptor) is an active-site residue.

Belongs to the gamma-glutamylcyclotransferase family. ChaC subfamily.

The protein localises to the cytoplasm. It localises to the cytosol. Its subcellular location is the golgi apparatus. The protein resides in the trans-Golgi network. The enzyme catalyses glutathione = L-cysteinylglycine + 5-oxo-L-proline. In terms of biological role, catalyzes the cleavage of glutathione into 5-oxo-L-proline and a Cys-Gly dipeptide. Acts specifically on glutathione, but not on other gamma-glutamyl peptides. Glutathione depletion is an important factor for apoptosis initiation and execution. Acts as a pro-apoptotic component of the unfolded protein response pathway by mediating the pro-apoptotic effects of the ATF4-ATF3-DDIT3/CHOP cascade. Negative regulator of Notch signaling pathway involved in embryonic neurogenesis: acts by inhibiting Notch cleavage by furin, maintaining Notch in an immature inactive form, thereby promoting neurogenesis in embryos. This chain is Glutathione-specific gamma-glutamylcyclotransferase 1, found in Danio rerio (Zebrafish).